The following is a 656-amino-acid chain: Probable serine/threonine-protein kinase sky1 (656 aa).

Positions 1 to 127 (MSDIQQDSTS…KQGGYHPVRR (127 aa)) are disordered. The segment covering 16-48 (TSLGGTSLGGTSLGGTSLGGTSLGGTSLGGTSL) has biased composition (gly residues). Low complexity-rich tracts occupy residues 49–64 (GGSTTTSTTTPKSTNS) and 72–89 (TSSNNNNNNNNNNNNNNE). Over residues 96 to 108 (AGSSNKSFMPLNN) the composition is skewed to polar residues. The Protein kinase domain maps to 135–648 (YQVVDKLGWG…AKDCLNHTWL (514 aa)). Residue 141–149 (LGWGHFSTV) participates in ATP binding. Positions 157–185 (TPITTSSSSSSTTTTTTSSSSNGNGNGNG) are disordered. Residues 160 to 179 (TTSSSSSSTTTTTTSSSSNG) are compositionally biased toward low complexity. Position 197 (lysine 197) interacts with ATP. Aspartate 298 serves as the catalytic Proton acceptor. The tract at residues 330 to 454 (RTSSSNKQSQ…TTATATATTT (125 aa)) is disordered. Residues 332–355 (SSSNKQSQQQQQPQQQQSQQNIND) are compositionally biased toward low complexity. 2 stretches are compositionally biased toward basic and acidic residues: residues 383 to 401 (SNRDRDNNKNKNIKKDDNK) and 413 to 440 (ENTDNKDLNSSEENKKEEEQQQNKKEEP). Residues 441–454 (TTTTTTATATATTT) are compositionally biased toward low complexity.

This sequence belongs to the protein kinase superfamily. CMGC Ser/Thr protein kinase family.

It catalyses the reaction L-seryl-[protein] + ATP = O-phospho-L-seryl-[protein] + ADP + H(+). It carries out the reaction L-threonyl-[protein] + ATP = O-phospho-L-threonyl-[protein] + ADP + H(+). The protein is Probable serine/threonine-protein kinase sky1 (sky1) of Dictyostelium discoideum (Social amoeba).